The following is a 216-amino-acid chain: Small ribosomal subunit protein uS3c (216 aa).

The 76-residue stretch at I43–E118 folds into the KH type-2 domain.

It belongs to the universal ribosomal protein uS3 family. In terms of assembly, part of the 30S ribosomal subunit.

The protein localises to the plastid. It localises to the chloroplast. This chain is Small ribosomal subunit protein uS3c (rps3), found in Dioscorea elephantipes (Elephant's foot yam).